Reading from the N-terminus, the 339-residue chain is tRNA N6-adenosine threonylcarbamoyltransferase (339 aa).

Fe cation-binding residues include histidine 111 and histidine 115. Residues 134 to 138 (LVSGG), aspartate 167, glycine 180, and asparagine 272 contribute to the substrate site. Aspartate 300 contacts Fe cation.

The protein belongs to the KAE1 / TsaD family. It depends on Fe(2+) as a cofactor.

The protein resides in the cytoplasm. It carries out the reaction L-threonylcarbamoyladenylate + adenosine(37) in tRNA = N(6)-L-threonylcarbamoyladenosine(37) in tRNA + AMP + H(+). Its function is as follows. Required for the formation of a threonylcarbamoyl group on adenosine at position 37 (t(6)A37) in tRNAs that read codons beginning with adenine. Is involved in the transfer of the threonylcarbamoyl moiety of threonylcarbamoyl-AMP (TC-AMP) to the N6 group of A37, together with TsaE and TsaB. TsaD likely plays a direct catalytic role in this reaction. This chain is tRNA N6-adenosine threonylcarbamoyltransferase, found in Sodalis glossinidius (strain morsitans).